The following is a 520-amino-acid chain: Putative thymidine phosphorylase 1 (520 aa).

It belongs to the thymidine/pyrimidine-nucleoside phosphorylase family. Type 2 subfamily.

It catalyses the reaction thymidine + phosphate = 2-deoxy-alpha-D-ribose 1-phosphate + thymine. The polypeptide is Putative thymidine phosphorylase 1 (Cupriavidus necator (strain ATCC 17699 / DSM 428 / KCTC 22496 / NCIMB 10442 / H16 / Stanier 337) (Ralstonia eutropha)).